We begin with the raw amino-acid sequence, 348 residues long: Alcohol dehydrogenase 1 (348 aa).

S2 carries the N-acetylserine modification. Residue C44 coordinates Zn(2+). Residues H45, T46, and H49 each contribute to the NAD(+) site. 7 residues coordinate Zn(2+): H67, E68, C98, C101, C104, C112, and C154. Positions 181, 182, 183, 202, and 207 each coordinate NAD(+). At S213 the chain carries Phosphoserine. F222 contributes to the NAD(+) binding site. Position 223 is a phosphothreonine (T223). Glycyl lysine isopeptide (Lys-Gly) (interchain with G-Cter in ubiquitin) cross-links involve residues K226 and K234. V269 and M271 together coordinate NAD(+). S279 bears the Phosphoserine mark. Residue K287 forms a Glycyl lysine isopeptide (Lys-Gly) (interchain with G-Cter in ubiquitin) linkage. NAD(+)-binding residues include S294 and V296. S316 carries the post-translational modification Phosphoserine. A Glycyl lysine isopeptide (Lys-Gly) (interchain with G-Cter in ubiquitin) cross-link involves residue K319. An NAD(+)-binding site is contributed by R341.

This sequence belongs to the zinc-containing alcohol dehydrogenase family. In terms of assembly, homotetramer. Zn(2+) is required as a cofactor.

The protein localises to the cytoplasm. It carries out the reaction a primary alcohol + NAD(+) = an aldehyde + NADH + H(+). The enzyme catalyses a secondary alcohol + NAD(+) = a ketone + NADH + H(+). It catalyses the reaction ethanol + NAD(+) = acetaldehyde + NADH + H(+). The catalysed reaction is allyl alcohol + NADP(+) = acrolein + NADPH + H(+). It carries out the reaction 1-propanol + NAD(+) = propanal + NADH + H(+). The enzyme catalyses butan-1-ol + NAD(+) = butanal + NADH + H(+). It catalyses the reaction hexan-1-ol + NAD(+) = hexanal + NADH + H(+). The catalysed reaction is (R)-lactaldehyde + NAD(+) = methylglyoxal + NADH + H(+). It carries out the reaction octan-1-ol + NAD(+) = octanal + NADH + H(+). The enzyme catalyses butan-2-ol + NAD(+) = butan-2-one + NADH + H(+). It catalyses the reaction propan-2-ol + NAD(+) = acetone + NADH + H(+). The catalysed reaction is isobutanol + NAD(+) = 2-methylpropanal + NADH + H(+). Preferentially fermentative isozyme that reduces acetaldehyde to ethanol during the fermentation of glucose. Major enzyme required for the conversion of acetaldehyde to ethanol. Plays a key role in the carbohydrate metabolism through the regeneration of NAD(+) from glycolytic NADH. In the reverse reaction, preferentially catalyzes the conversion of primary unbranched alcohols to their corresponding aldehydes. Also shows activity toward secondary alcohols. Most active with ethanol, and its activity decreases as the size of the alcohol is increased. In Saccharomyces cerevisiae (strain ATCC 204508 / S288c) (Baker's yeast), this protein is Alcohol dehydrogenase 1 (ADH1).